The chain runs to 100 residues: Small ribosomal subunit protein uS17 (100 aa).

This sequence belongs to the universal ribosomal protein uS17 family. As to quaternary structure, part of the 30S ribosomal subunit.

One of the primary rRNA binding proteins, it binds specifically to the 5'-end of 16S ribosomal RNA. The polypeptide is Small ribosomal subunit protein uS17 (Erythrobacter litoralis (strain HTCC2594)).